The sequence spans 664 residues: Probable 3',5'-cyclic phosphodiesterase pde-1 (664 aa).

Disordered stretches follow at residues threonine 24–isoleucine 60 and arginine 113–aspartate 142. 2 stretches are compositionally biased toward basic and acidic residues: residues serine 28–leucine 38 and asparagine 114–proline 130. Residues valine 256–glutamate 634 enclose the PDEase domain. Histidine 333 serves as the catalytic Proton donor. 4 residues coordinate a divalent metal cation: histidine 337, histidine 373, aspartate 374, and aspartate 480. Disordered regions lie at residues aspartate 564–serine 597 and arginine 630–asparagine 664. Residues arginine 630–alanine 644 are compositionally biased toward basic and acidic residues.

The protein belongs to the cyclic nucleotide phosphodiesterase family. In terms of assembly, interacts with cmd-1 in the presence of Ca(2+). The cofactor is a divalent metal cation. In terms of tissue distribution, expressed in AFD thermosensory neurons.

The enzyme catalyses a nucleoside 3',5'-cyclic phosphate + H2O = a nucleoside 5'-phosphate + H(+). Functionally, redundantly with pde-5, plays a role in the AFD thermosensory neurons to regulate microvilli receptive ending morphology, possibly by regulating cGMP levels. This is Probable 3',5'-cyclic phosphodiesterase pde-1 (pde-1) from Caenorhabditis elegans.